The sequence spans 1155 residues: DNA-directed RNA polymerase subunit beta (1155 aa).

The protein belongs to the RNA polymerase beta chain family. In terms of assembly, the RNAP catalytic core consists of 2 alpha, 1 beta, 1 beta' and 1 omega subunit. When a sigma factor is associated with the core the holoenzyme is formed, which can initiate transcription.

It catalyses the reaction RNA(n) + a ribonucleoside 5'-triphosphate = RNA(n+1) + diphosphate. In terms of biological role, DNA-dependent RNA polymerase catalyzes the transcription of DNA into RNA using the four ribonucleoside triphosphates as substrates. The chain is DNA-directed RNA polymerase subunit beta from Thermobifida fusca (strain YX).